A 196-amino-acid chain; its full sequence is Elongation factor Ts (196 aa).

Residues 80 to 83 form an involved in Mg(2+) ion dislocation from EF-Tu region; sequence TDFV.

It belongs to the EF-Ts family.

It is found in the cytoplasm. Its function is as follows. Associates with the EF-Tu.GDP complex and induces the exchange of GDP to GTP. It remains bound to the aminoacyl-tRNA.EF-Tu.GTP complex up to the GTP hydrolysis stage on the ribosome. This chain is Elongation factor Ts, found in Thermosipho melanesiensis (strain DSM 12029 / CIP 104789 / BI429).